A 349-amino-acid chain; its full sequence is N-acetyltaurine hydrolase (349 aa).

A divalent metal cation-binding residues include H26, H28, E169, H201, H230, and D298.

The protein belongs to the metallo-dependent hydrolases superfamily. Phosphotriesterase family. The cofactor is a divalent metal cation.

The protein localises to the cytoplasm. It localises to the cytosol. The catalysed reaction is N-acetyltaurine + H2O = taurine + acetate. It catalyses the reaction N-propanoyltaurine + H2O = propanoate + taurine. It carries out the reaction N-acetyl-L-methionine + H2O = L-methionine + acetate. The enzyme catalyses N-acetyl-L-isoleucine + H2O = L-isoleucine + acetate. The catalysed reaction is N-acetyl-L-leucine + H2O = L-leucine + acetate. It catalyses the reaction N-acetyl-L-valine + H2O = L-valine + acetate. Functionally, N-acetyltaurine hydrolase that catalyzes the hydrolysis of N-acetyltaurine into taurine and acetate. PTER also acts on other N-acetyl amino acids (Met, Ile, Leu, Val) and N-propionyltaurine, but at lower rates. The protein is N-acetyltaurine hydrolase (pter) of Xenopus tropicalis (Western clawed frog).